The sequence spans 109 residues: Heterogeneous nuclear ribonucleoprotein-like protein HD40 (109 aa).

A disordered region spans residues 1-36 (EEVSNGQEHTEGMXQGEXNXIXVEEHHEGEKNSHLV). Positions 23 to 36 (VEEHHEGEKNSHLV) are enriched in basic and acidic residues. The RRM domain maps to 40-50 (EEKKLFVGALS). An asymmetric dimethylarginine mark is found at arginine 102 and arginine 105.

It is found in the cytoplasm. Its subcellular location is the nucleus. The protein is Heterogeneous nuclear ribonucleoprotein-like protein HD40 of Artemia salina (Brine shrimp).